The chain runs to 505 residues: uncharacterized protein (505 aa).

The region spanning 193-440 (CTNKKCNLCE…LEIKKKYIGR (248 aa)) is the Radical SAM core domain. Residues cysteine 208, cysteine 216, and cysteine 219 each coordinate [4Fe-4S] cluster. The region spanning 435 to 499 (KKYIGRVLEV…EKYLEGRILK (65 aa)) is the TRAM domain.

The cofactor is [4Fe-4S] cluster.

This is an uncharacterized protein from Methanocaldococcus jannaschii (strain ATCC 43067 / DSM 2661 / JAL-1 / JCM 10045 / NBRC 100440) (Methanococcus jannaschii).